Here is a 331-residue protein sequence, read N- to C-terminus: UDP-N-acetylenolpyruvoylglucosamine reductase (331 aa).

In terms of domain architecture, FAD-binding PCMH-type spans 54–221; the sequence is RVGGAAELYV…TQATFQLQPG (168 aa). R200 is a catalytic residue. The active-site Proton donor is the S251. Residue E321 is part of the active site.

The protein belongs to the MurB family. FAD serves as cofactor.

The protein localises to the cytoplasm. The enzyme catalyses UDP-N-acetyl-alpha-D-muramate + NADP(+) = UDP-N-acetyl-3-O-(1-carboxyvinyl)-alpha-D-glucosamine + NADPH + H(+). It functions in the pathway cell wall biogenesis; peptidoglycan biosynthesis. Its function is as follows. Cell wall formation. This is UDP-N-acetylenolpyruvoylglucosamine reductase from Nostoc sp. (strain PCC 7120 / SAG 25.82 / UTEX 2576).